Here is a 159-residue protein sequence, read N- to C-terminus: Probable cyclic pyranopterin monophosphate synthase (159 aa).

Residues 74–76 (MCH) and 110–111 (ME) contribute to the substrate site. The active site involves aspartate 125.

This sequence belongs to the MoaC family. In terms of assembly, homohexamer; trimer of dimers.

The catalysed reaction is (8S)-3',8-cyclo-7,8-dihydroguanosine 5'-triphosphate = cyclic pyranopterin phosphate + diphosphate. Its pathway is cofactor biosynthesis; molybdopterin biosynthesis. Its function is as follows. Catalyzes the conversion of (8S)-3',8-cyclo-7,8-dihydroguanosine 5'-triphosphate to cyclic pyranopterin monophosphate (cPMP). The protein is Probable cyclic pyranopterin monophosphate synthase of Methanococcoides burtonii (strain DSM 6242 / NBRC 107633 / OCM 468 / ACE-M).